An 834-amino-acid polypeptide reads, in one-letter code: Periplasmic nitrate reductase (834 aa).

The tat-type signal signal peptide spans 1–29 (MSLTRRQFAKANAAAIAATVAGMPIASTA). The region spanning 41–97 (LKWDKAPCRFCGTGCGVMVATRENRVVATHGDVKADVNRGINCVKGYFLSKIMYGTD) is the 4Fe-4S Mo/W bis-MGD-type domain. Cys48, Cys51, Cys55, and Cys83 together coordinate [4Fe-4S] cluster. Residues Lys85, Gln152, Asn177, Cys181, 214 to 221 (WGSNMAEM), 245 to 249 (STFEH), 264 to 266 (QTD), Met375, Gln379, Asn485, 511 to 512 (SD), Lys534, Asp561, and 721 to 730 (TGRVLEHWHT) each bind Mo-bis(molybdopterin guanine dinucleotide). Phe797 contacts substrate. Mo-bis(molybdopterin guanine dinucleotide)-binding residues include Asn805 and Lys822.

This sequence belongs to the prokaryotic molybdopterin-containing oxidoreductase family. NasA/NapA/NarB subfamily. As to quaternary structure, component of the periplasmic nitrate reductase NapAB complex composed of NapA and NapB. [4Fe-4S] cluster serves as cofactor. It depends on Mo-bis(molybdopterin guanine dinucleotide) as a cofactor. Predicted to be exported by the Tat system. The position of the signal peptide cleavage has not been experimentally proven.

The protein resides in the periplasm. It catalyses the reaction 2 Fe(II)-[cytochrome] + nitrate + 2 H(+) = 2 Fe(III)-[cytochrome] + nitrite + H2O. In terms of biological role, catalytic subunit of the periplasmic nitrate reductase complex NapAB. Receives electrons from NapB and catalyzes the reduction of nitrate to nitrite. The sequence is that of Periplasmic nitrate reductase from Stutzerimonas stutzeri (Pseudomonas stutzeri).